The following is a 314-amino-acid chain: DNA-directed RNA polymerase subunit alpha (314 aa).

Residues 1 to 227 (MTTFEIECIE…ELLFPLKEIN (227 aa)) form an alpha N-terminal domain (alpha-NTD) region. Residues 237–314 (IEDSKINQIL…LPKEKTSKSN (78 aa)) are alpha C-terminal domain (alpha-CTD).

The protein belongs to the RNA polymerase alpha chain family. As to quaternary structure, in plastids the minimal PEP RNA polymerase catalytic core is composed of four subunits: alpha, beta, beta', and beta''. When a (nuclear-encoded) sigma factor is associated with the core the holoenzyme is formed, which can initiate transcription.

The protein resides in the plastid. The protein localises to the chloroplast. It carries out the reaction RNA(n) + a ribonucleoside 5'-triphosphate = RNA(n+1) + diphosphate. DNA-dependent RNA polymerase catalyzes the transcription of DNA into RNA using the four ribonucleoside triphosphates as substrates. This chain is DNA-directed RNA polymerase subunit alpha, found in Pyrenomonas salina.